The following is a 490-amino-acid chain: Cytochrome P450 2C29 (490 aa).

An N-terminal signal peptide occupies residues 1-25 (MDLVVFLALTLSCLILLSLWRQSSG). N6-acetyllysine is present on residues Lys249, Lys252, and Lys375. Cys435 is a heme binding site.

This sequence belongs to the cytochrome P450 family. Heme serves as cofactor. In terms of tissue distribution, expressed in liver as well as in extrahepatic tissues including brain, kidney, lung, heart, and intestine.

It is found in the endoplasmic reticulum membrane. The protein localises to the microsome membrane. It carries out the reaction an organic molecule + reduced [NADPH--hemoprotein reductase] + O2 = an alcohol + oxidized [NADPH--hemoprotein reductase] + H2O + H(+). It catalyses the reaction (5Z,8Z,11Z,14Z)-eicosatetraenoate + reduced [NADPH--hemoprotein reductase] + O2 = 14,15-epoxy-(5Z,8Z,11Z)-eicosatrienoate + oxidized [NADPH--hemoprotein reductase] + H2O + H(+). It participates in lipid metabolism; arachidonate metabolism. A cytochrome P450 monooxygenase that selectively catalyzes the epoxidation of 14,15 double bond of (5Z,8Z,11Z,14Z)-eicosatetraenoic acid (arachidonate) forming 14,15-epoxyeicosatrienoic acid (14,15-EET) regioisomer. Mechanistically, uses molecular oxygen inserting one oxygen atom into a substrate, and reducing the second into a water molecule, with two electrons provided by NADPH via cytochrome P450 reductase (CPR; NADPH--hemoprotein reductase). In Mus musculus (Mouse), this protein is Cytochrome P450 2C29.